A 468-amino-acid chain; its full sequence is ATP synthase subunit beta (468 aa).

Position 155-162 (155-162 (GGAGVGKT)) interacts with ATP.

This sequence belongs to the ATPase alpha/beta chains family. In terms of assembly, F-type ATPases have 2 components, CF(1) - the catalytic core - and CF(0) - the membrane proton channel. CF(1) has five subunits: alpha(3), beta(3), gamma(1), delta(1), epsilon(1). CF(0) has three main subunits: a(1), b(2) and c(9-12). The alpha and beta chains form an alternating ring which encloses part of the gamma chain. CF(1) is attached to CF(0) by a central stalk formed by the gamma and epsilon chains, while a peripheral stalk is formed by the delta and b chains.

It is found in the cell inner membrane. It catalyses the reaction ATP + H2O + 4 H(+)(in) = ADP + phosphate + 5 H(+)(out). Functionally, produces ATP from ADP in the presence of a proton gradient across the membrane. The catalytic sites are hosted primarily by the beta subunits. In Thermotoga neapolitana (strain ATCC 49049 / DSM 4359 / NBRC 107923 / NS-E), this protein is ATP synthase subunit beta.